Consider the following 383-residue polypeptide: MKNVLPPFIEIYRALIATPSISATEESLDQSNASLITLLAGWFSDLGFNVEVQPVPGTRNKFNMLASTGHGAGGLLLTGHTDTVPFDDGRWTRDPFTLTEHDNKLYGLGTADMKGFFAFILDALRDVDVTKLKKPLYILATADEETSMAGARYFSKTTALRPDCAIIGEPTSLQPIRAHKGHISNVVRVLGQSGHSSDPARGVNAIELMHDAIGHIMQLRDSLKARYHYEAFTVPYPTLNLGHIHGGDASNRICACCELHMDIRPLPGMTLNDLNGLLNDALAPVSERWPGRLTVAELHPPIPGYECPPDHQLVEVVEKLLGTKTDVVNYCTEAPFMQTLCPTLVLGPGSINQAHQPDEYLETRFIKPTRELITQVVHHFCWH.

H80 is a binding site for Zn(2+). D82 is an active-site residue. Residue D112 coordinates Zn(2+). E144 is an active-site residue. Zn(2+) is bound by residues E145, E169, and H355.

This sequence belongs to the peptidase M20A family. ArgE subfamily. As to quaternary structure, homodimer. The cofactor is Zn(2+). Co(2+) serves as cofactor. Requires glutathione as cofactor.

It localises to the cytoplasm. The enzyme catalyses N(2)-acetyl-L-ornithine + H2O = L-ornithine + acetate. It participates in amino-acid biosynthesis; L-arginine biosynthesis; L-ornithine from N(2)-acetyl-L-ornithine (linear): step 1/1. In terms of biological role, catalyzes the hydrolysis of the amide bond of N(2)-acetylated L-amino acids. Cleaves the acetyl group from N-acetyl-L-ornithine to form L-ornithine, an intermediate in L-arginine biosynthesis pathway, and a branchpoint in the synthesis of polyamines. This chain is Acetylornithine deacetylase, found in Salmonella typhimurium (strain LT2 / SGSC1412 / ATCC 700720).